The primary structure comprises 419 residues: Maltoporin 2 (419 aa).

The first 23 residues, 1 to 23, serve as a signal peptide directing secretion; the sequence is MKTSLRTLSVALAAALVSPSVLA.

This sequence belongs to the porin LamB (TC 1.B.3) family. In terms of assembly, homotrimer formed of three 18-stranded antiparallel beta-barrels, containing three independent channels.

Its subcellular location is the cell outer membrane. It catalyses the reaction beta-maltose(in) = beta-maltose(out). In terms of biological role, involved in the transport of maltose and maltodextrins. This is Maltoporin 2 from Yersinia pseudotuberculosis serotype O:1b (strain IP 31758).